The primary structure comprises 375 residues: N-acetyldiaminopimelate deacetylase (375 aa).

The active site involves Asp-69. Glu-128 (proton acceptor) is an active-site residue.

This sequence belongs to the peptidase M20A family. N-acetyldiaminopimelate deacetylase subfamily.

It carries out the reaction N-acetyl-(2S,6S)-2,6-diaminopimelate + H2O = (2S,6S)-2,6-diaminopimelate + acetate. It functions in the pathway amino-acid biosynthesis; L-lysine biosynthesis via DAP pathway; LL-2,6-diaminopimelate from (S)-tetrahydrodipicolinate (acetylase route): step 3/3. Catalyzes the conversion of N-acetyl-diaminopimelate to diaminopimelate and acetate. The polypeptide is N-acetyldiaminopimelate deacetylase (Priestia megaterium (strain ATCC 12872 / QMB1551) (Bacillus megaterium)).